The following is a 460-amino-acid chain: Probable lipase C14C8.15 (460 aa).

Topologically, residues 1–16 (MTLNGNIMKYCLEKGE) are cytoplasmic. Residues 17–37 (ILISFLLIALESMFRICTVIL) form a helical; Signal-anchor for type II membrane protein membrane-spanning segment. Residues 38–460 (PSPLRNWFYE…LVDGVMNHTI (423 aa)) are Lumenal-facing. Ser-214 acts as the Nucleophile in catalysis. The N-linked (GlcNAc...) asparagine glycan is linked to Asn-308. Catalysis depends on charge relay system residues Asp-382 and His-408. Asn-457 carries N-linked (GlcNAc...) asparagine glycosylation.

The protein belongs to the AB hydrolase superfamily. Lipase family.

The protein resides in the golgi apparatus. It localises to the membrane. Functionally, probable lipase. The protein is Probable lipase C14C8.15 of Schizosaccharomyces pombe (strain 972 / ATCC 24843) (Fission yeast).